The primary structure comprises 269 residues: Phosphate import ATP-binding protein PstB (269 aa).

The ABC transporter domain occupies isoleucine 23–isoleucine 264. Position 55-62 (glycine 55–serine 62) interacts with ATP.

This sequence belongs to the ABC transporter superfamily. Phosphate importer (TC 3.A.1.7) family. In terms of assembly, the complex is composed of two ATP-binding proteins (PstB), two transmembrane proteins (PstC and PstA) and a solute-binding protein (PstS).

The protein resides in the cell inner membrane. The enzyme catalyses phosphate(out) + ATP + H2O = ADP + 2 phosphate(in) + H(+). Functionally, part of the ABC transporter complex PstSACB involved in phosphate import. Responsible for energy coupling to the transport system. The sequence is that of Phosphate import ATP-binding protein PstB from Xylella fastidiosa (strain Temecula1 / ATCC 700964).